The primary structure comprises 272 residues: uncharacterized protein (272 aa).

The protein belongs to the sodium:galactoside symporter (TC 2.A.2) family.

This is an uncharacterized protein from Pseudescherichia vulneris (Escherichia vulneris).